Here is a 206-residue protein sequence, read N- to C-terminus: Histidine biosynthesis bifunctional protein HisIE (206 aa).

Positions M1 to F114 are phosphoribosyl-AMP cyclohydrolase. Positions L115–V206 are phosphoribosyl-ATP pyrophosphohydrolase.

In the N-terminal section; belongs to the PRA-CH family. It in the C-terminal section; belongs to the PRA-PH family.

The protein resides in the cytoplasm. The catalysed reaction is 1-(5-phospho-beta-D-ribosyl)-ATP + H2O = 1-(5-phospho-beta-D-ribosyl)-5'-AMP + diphosphate + H(+). It catalyses the reaction 1-(5-phospho-beta-D-ribosyl)-5'-AMP + H2O = 1-(5-phospho-beta-D-ribosyl)-5-[(5-phospho-beta-D-ribosylamino)methylideneamino]imidazole-4-carboxamide. It functions in the pathway amino-acid biosynthesis; L-histidine biosynthesis; L-histidine from 5-phospho-alpha-D-ribose 1-diphosphate: step 2/9. The protein operates within amino-acid biosynthesis; L-histidine biosynthesis; L-histidine from 5-phospho-alpha-D-ribose 1-diphosphate: step 3/9. This is Histidine biosynthesis bifunctional protein HisIE (hisI) from Buchnera aphidicola subsp. Baizongia pistaciae (strain Bp).